Reading from the N-terminus, the 762-residue chain is 5-methyltetrahydropteroyltriglutamate--homocysteine methyltransferase (762 aa).

5-methyltetrahydropteroyltri-L-glutamate contacts are provided by residues 17-20 (REWK) and Lys-111. L-homocysteine-binding positions include 435–437 (IGS) and Glu-488. Residues 435–437 (IGS) and Glu-488 each bind L-methionine. 5-methyltetrahydropteroyltri-L-glutamate-binding positions include 519–520 (RC) and Trp-565. Asp-603 serves as a coordination point for L-homocysteine. Asp-603 provides a ligand contact to L-methionine. Glu-609 serves as a coordination point for 5-methyltetrahydropteroyltri-L-glutamate. His-645, Cys-647, and Glu-669 together coordinate Zn(2+). The active-site Proton donor is the His-698. Cys-730 is a binding site for Zn(2+).

The protein belongs to the vitamin-B12 independent methionine synthase family. The cofactor is Zn(2+).

It catalyses the reaction 5-methyltetrahydropteroyltri-L-glutamate + L-homocysteine = tetrahydropteroyltri-L-glutamate + L-methionine. Its pathway is amino-acid biosynthesis; L-methionine biosynthesis via de novo pathway; L-methionine from L-homocysteine (MetE route): step 1/1. Its function is as follows. Catalyzes the transfer of a methyl group from 5-methyltetrahydrofolate to homocysteine resulting in methionine formation. This is 5-methyltetrahydropteroyltriglutamate--homocysteine methyltransferase from Bacillus anthracis (strain CDC 684 / NRRL 3495).